A 481-amino-acid polypeptide reads, in one-letter code: UDP-glycosyltransferase 72B3 (481 aa).

Residues Ser277, 347-349, 364-372, and 386-389 contribute to the UDP-alpha-D-glucose site; these read APQ, HCGWNSSLE, and YAEQ.

It belongs to the UDP-glycosyltransferase family.

Functionally, possesses low quercetin 3-O-glucosyltransferase activity in vitro. The sequence is that of UDP-glycosyltransferase 72B3 (UGT72B3) from Arabidopsis thaliana (Mouse-ear cress).